The chain runs to 1263 residues: Valine--tRNA ligase (1263 aa).

S2 is modified (N-acetylserine). The 131-residue stretch at 89–219 folds into the GST C-terminal domain; it reads GSRAAVLVQQ…YSGARSVTQQ (131 aa). A disordered region spans residues 218 to 294; the sequence is QQPGSEVIAP…PGEKKDVSGA (77 aa). 2 stretches are compositionally biased toward basic and acidic residues: residues 234–248 and 259–274; these read LKKEAKKREKLEKFQ and HGEKKPKPEKKEKRDP. The short motif at 343–353 is the 'HIGH' region element; it reads PNVTGSLHLGH. Phosphoserine occurs at positions 436 and 526. K644 carries the post-translational modification N6-acetyllysine. A 'KMSKS' region motif is present at residues 861–865; the sequence is KMSKS. K864 contributes to the ATP binding site.

The protein belongs to the class-I aminoacyl-tRNA synthetase family. As to quaternary structure, forms high-molecular-mass aggregates with elongation factor 1.

The enzyme catalyses tRNA(Val) + L-valine + ATP = L-valyl-tRNA(Val) + AMP + diphosphate. Can be regulated by protein kinase C-dependent phosphorylation. This Mus musculus (Mouse) protein is Valine--tRNA ligase (Vars1).